The primary structure comprises 97 residues: UPF0235 protein PFL_5841 (97 aa).

The protein belongs to the UPF0235 family.

The sequence is that of UPF0235 protein PFL_5841 from Pseudomonas fluorescens (strain ATCC BAA-477 / NRRL B-23932 / Pf-5).